The sequence spans 433 residues: Probable carboxypeptidase ATEG_02905 (433 aa).

Residues 1-18 form the signal peptide; the sequence is MKSAISLLLASAATYVGA. The tract at residues 20–40 is disordered; sequence PHPEPPQLVLSPSTSTGVHGD. N-linked (GlcNAc...) asparagine glycosylation is present at N92. D161 serves as a coordination point for Zn(2+). E193 acts as the Proton acceptor in catalysis. Position 194 (E194) interacts with Zn(2+).

It belongs to the peptidase M20A family. Zn(2+) is required as a cofactor.

The protein resides in the secreted. The chain is Probable carboxypeptidase ATEG_02905 from Aspergillus terreus (strain NIH 2624 / FGSC A1156).